We begin with the raw amino-acid sequence, 569 residues long: Proline--tRNA ligase (569 aa).

This sequence belongs to the class-II aminoacyl-tRNA synthetase family. ProS type 1 subfamily. Homodimer.

Its subcellular location is the cytoplasm. The catalysed reaction is tRNA(Pro) + L-proline + ATP = L-prolyl-tRNA(Pro) + AMP + diphosphate. Functionally, catalyzes the attachment of proline to tRNA(Pro) in a two-step reaction: proline is first activated by ATP to form Pro-AMP and then transferred to the acceptor end of tRNA(Pro). As ProRS can inadvertently accommodate and process non-cognate amino acids such as alanine and cysteine, to avoid such errors it has two additional distinct editing activities against alanine. One activity is designated as 'pretransfer' editing and involves the tRNA(Pro)-independent hydrolysis of activated Ala-AMP. The other activity is designated 'posttransfer' editing and involves deacylation of mischarged Ala-tRNA(Pro). The misacylated Cys-tRNA(Pro) is not edited by ProRS. The polypeptide is Proline--tRNA ligase (Dehalococcoides mccartyi (strain CBDB1)).